The sequence spans 146 residues: MSRSRLFSVTSAISTIGILCLPLFQLVLSDLPCEEDEMCVNYNDQHPNGWYIWILLLLVLVAALLCGAVVLCLQCWLRRPRIDSHRRTMAVFAVGDLDSIYGTEAAVSPTVGIHLQTQTPDLYPVPAPCFGPLGSPPPYEEIVKTT.

The signal sequence occupies residues 1–29 (MSRSRLFSVTSAISTIGILCLPLFQLVLS). Residues 52 to 72 (IWILLLLVLVAALLCGAVVLC) traverse the membrane as a helical segment.

As to quaternary structure, interacts with WWOX. Expressed in some signet-ring cell carcinoma, especially those showing high invasion and metastatic activity (at protein level).

Its subcellular location is the membrane. The polypeptide is Transmembrane protein 207 (TMEM207) (Homo sapiens (Human)).